Reading from the N-terminus, the 1029-residue chain is Tyrosine-protein kinase-like otk (1029 aa).

The signal sequence occupies residues 1–18; it reads MISIYGLVMALMMASVLA. Over 19–577 the chain is Extracellular; it reads SSSRFQRVPQ…GGDGFLVTRA (559 aa). 5 consecutive Ig-like C2-type domains span residues 21 to 110, 109 to 195, 247 to 361, 364 to 459, and 464 to 554; these read SRFQ…AKLS, LSVI…RVMS, PEDL…APIS, PGIL…VAIN, and PKFS…VQLV. N35 is a glycosylation site (N-linked (GlcNAc...) asparagine). 4 cysteine pairs are disulfide-bonded: C42–C91, C133–C184, C272–C350, and C395–C443. N-linked (GlcNAc...) asparagine glycosylation is found at N332, N413, N425, N440, N453, N508, and N520. A disulfide bond links C486 and C538. A helical membrane pass occupies residues 578–598; it reads VLITMTVALAYIVLVVGLMLW. Topologically, residues 599-1029 are cytoplasmic; it reads CRYRRQARKA…LSKAMQSAEK (431 aa). Disordered regions lie at residues 613–675 and 714–756; these read LSTK…KKSA and SPSD…KTSM. A compositionally biased stretch (polar residues) spans 651 to 669; that stretch reads KSSGDAQKSDDTACSQQSR. S674 carries the phosphoserine modification. The Protein kinase; inactive domain occupies 688 to 1024; it reads LSELIQIGRG…QLGAALSKAM (337 aa). Over residues 716-727 the composition is skewed to basic and acidic residues; the sequence is SDKDADTEKQHS.

It belongs to the protein kinase superfamily. Tyr protein kinase family. Insulin receptor subfamily. Interacts with plexA; component of a receptor complex that mediates the repulsive signaling in response to Semaphorin ligands.

Its subcellular location is the cell membrane. Its function is as follows. Acts as a calcium-dependent, homophilic cell adhesion molecule that regulates neural recognition during the development of the nervous system. Component of the repulsive Plexin signaling response to regulate motor axon guidance at the embryonic stage. Also component of a receptor complex that is required in the adult visual system to innervate the lamina layer; specific targeting of R1-R6 axons. The chain is Tyrosine-protein kinase-like otk from Drosophila simulans (Fruit fly).